The following is a 375-amino-acid chain: Alcohol dehydrogenase 1C (375 aa).

Ser2 is subject to N-acetylserine. Ser23 is modified (phosphoserine). Zn(2+) contacts are provided by Cys47, His68, Cys98, Cys101, Cys104, Cys112, and Cys175. NAD(+)-binding positions include 200 to 205 (GLGGVG), Asp224, Lys229, Ile270, 293 to 295 (VGV), 318 to 320 (AIF), and Arg370.

It belongs to the zinc-containing alcohol dehydrogenase family. Dimer of identical or non-identical chains of class I alcohol dehydrogenase: ADH1A, ADH1B, and ADH1C. Requires Zn(2+) as cofactor.

Its subcellular location is the cytoplasm. It carries out the reaction a primary alcohol + NAD(+) = an aldehyde + NADH + H(+). The catalysed reaction is ethanol + NAD(+) = acetaldehyde + NADH + H(+). Alcohol dehydrogenase. Exhibits high activity for ethanol oxidation and plays a major role in ethanol catabolism. The sequence is that of Alcohol dehydrogenase 1C (ADH1C) from Homo sapiens (Human).